We begin with the raw amino-acid sequence, 57 residues long: Large ribosomal subunit protein bL32 (57 aa).

Belongs to the bacterial ribosomal protein bL32 family.

The protein is Large ribosomal subunit protein bL32 (rpmF) of Halalkalibacterium halodurans (strain ATCC BAA-125 / DSM 18197 / FERM 7344 / JCM 9153 / C-125) (Bacillus halodurans).